The sequence spans 744 residues: Elongation factor G, mitochondrial (744 aa).

The transit peptide at 1–25 (MTISCLLRIRPALAKSFFENGQRAF) directs the protein to the mitochondrion. The 278-residue stretch at 38–315 (ERIRNIGISA…AVLDYLPNPG (278 aa)) folds into the tr-type G domain. Residues 47–54 (AHIDSGKT), 114–118 (DTPGH), and 168–171 (NKLD) each bind GTP.

The protein belongs to the TRAFAC class translation factor GTPase superfamily. Classic translation factor GTPase family. EF-G/EF-2 subfamily.

The protein localises to the mitochondrion. Its pathway is protein biosynthesis; polypeptide chain elongation. In terms of biological role, mitochondrial GTPase that catalyzes the GTP-dependent ribosomal translocation step during translation elongation. During this step, the ribosome changes from the pre-translocational (PRE) to the post-translocational (POST) state as the newly formed A-site-bound peptidyl-tRNA and P-site-bound deacylated tRNA move to the P and E sites, respectively. Catalyzes the coordinated movement of the two tRNA molecules, the mRNA and conformational changes in the ribosome. This Culex quinquefasciatus (Southern house mosquito) protein is Elongation factor G, mitochondrial.